Consider the following 394-residue polypeptide: Protein LAX PANICLE 2 (394 aa).

Residues 1-193 form a disordered region; it reads MVPARSLAHP…PTPRHHHHDV (193 aa). The span at 8 to 20 shows a compositional bias: basic residues; the sequence is AHPHPHLVRRRRD. The segment covering 60–84 has biased composition (basic and acidic residues); that stretch reads QHDPPKQPPPREADDDHHRIQEREP. Low complexity-rich tracts occupy residues 90-101, 119-131, and 146-155; these read TTTRNQRLQLQL, GTSGSSSGGSSSN, and GPASPGASAG. Positions 170 to 185 are enriched in pro residues; that stretch reads APQPPTPTPTPTPTPT.

Interacts with LAX1.

It localises to the nucleus. Functionally, involved in the regulation of shoot branching by controlling axillary meristem (AM) formation. Functions in association with LAX1 to regulate the process of AM formation. Possesses transactivation activity in yeast. This Oryza sativa subsp. japonica (Rice) protein is Protein LAX PANICLE 2.